We begin with the raw amino-acid sequence, 103 residues long: Large ribosomal subunit protein bL21 (103 aa).

It belongs to the bacterial ribosomal protein bL21 family. As to quaternary structure, part of the 50S ribosomal subunit. Contacts protein L20.

Functionally, this protein binds to 23S rRNA in the presence of protein L20. The sequence is that of Large ribosomal subunit protein bL21 from Leptothrix cholodnii (strain ATCC 51168 / LMG 8142 / SP-6) (Leptothrix discophora (strain SP-6)).